The primary structure comprises 271 residues: Tryptophan synthase alpha chain (271 aa).

Active-site proton acceptor residues include Glu-49 and Asp-60.

It belongs to the TrpA family. Tetramer of two alpha and two beta chains.

The catalysed reaction is (1S,2R)-1-C-(indol-3-yl)glycerol 3-phosphate + L-serine = D-glyceraldehyde 3-phosphate + L-tryptophan + H2O. It functions in the pathway amino-acid biosynthesis; L-tryptophan biosynthesis; L-tryptophan from chorismate: step 5/5. In terms of biological role, the alpha subunit is responsible for the aldol cleavage of indoleglycerol phosphate to indole and glyceraldehyde 3-phosphate. This is Tryptophan synthase alpha chain from Burkholderia multivorans (strain ATCC 17616 / 249).